The primary structure comprises 86 residues: MeuNaTxbeta-1 (86 aa).

The N-terminal stretch at M1–T20 is a signal peptide. The 63-residue stretch at D21–N83 folds into the LCN-type CS-alpha/beta domain. Cystine bridges form between C32–C82, C36–C57, C43–C64, and C47–C66.

In terms of tissue distribution, expressed by the venom gland.

The protein localises to the secreted. Functionally, inhibits sodium channels (Nav). Also moderately inhibits human calcium-activated potassium channel KCa1.1/KCNMA1/BK (41.9% decrease at 2 uM toxin concentration). Shows moderate antimicrobial activity against both Gram-positive and -negative bacteria. The sequence is that of MeuNaTxbeta-1 from Mesobuthus eupeus (Lesser Asian scorpion).